The following is a 195-amino-acid chain: Flagellar transcriptional regulator FlhC (195 aa).

Positions 137, 140, 157, and 160 each coordinate Zn(2+). The segment at 165–195 is disordered; the sequence is RAGSARRKTTTRKAVAPTHKTTAASRKAVVA.

It belongs to the FlhC family. In terms of assembly, heterohexamer composed of two FlhC and four FlhD subunits. Each FlhC binds a FlhD dimer, forming a heterotrimer, and a hexamer assembles by dimerization of two heterotrimers. Zn(2+) serves as cofactor.

It is found in the cytoplasm. Its function is as follows. Functions in complex with FlhD as a master transcriptional regulator that regulates transcription of several flagellar and non-flagellar operons by binding to their promoter region. Activates expression of class 2 flagellar genes, including fliA, which is a flagellum-specific sigma factor that turns on the class 3 genes. Also regulates genes whose products function in a variety of physiological pathways. The chain is Flagellar transcriptional regulator FlhC from Thauera aminoaromatica.